The primary structure comprises 296 residues: Coiled-coil domain-containing protein 69 (296 aa).

Positions 1 to 18 (MGCRHSRLSSCKPPKKKR) are enriched in basic residues. The segment at 1–41 (MGCRHSRLSSCKPPKKKRQEPEPEQPPRPEPHELGPLNGDT) is disordered. Gly2 is lipidated: N-myristoyl glycine. Residues 19–33 (QEPEPEQPPRPEPHE) show a composition bias toward basic and acidic residues. Residues 48 to 272 (CASEEAERHQ…QEKEELLYRV (225 aa)) adopt a coiled-coil conformation. A phosphoserine mark is found at Ser154 and Ser241.

The protein belongs to the CCDC69 family. In terms of tissue distribution, highly expressed in duodenum, esophagus, pancreas, prostate, salivary gland, thymus and urinary bladder.

The protein resides in the cytoplasm. The protein localises to the cytoskeleton. It localises to the spindle. Its subcellular location is the midbody. In terms of biological role, may act as a scaffold to regulate the recruitment and assembly of spindle midzone components. Required for the localization of AURKB and PLK1 to the spindle midzone. The protein is Coiled-coil domain-containing protein 69 of Homo sapiens (Human).